Reading from the N-terminus, the 135-residue chain is L-alanine exporter AlaE (135 aa).

3 helical membrane passes run 9-29 (VATV…IAGM), 75-95 (DILA…LIAG), and 96-116 (ASFA…ILLA).

Belongs to the AlaE exporter family.

The protein localises to the cell inner membrane. In terms of biological role, exports L-alanine. The sequence is that of L-alanine exporter AlaE from Cereibacter sphaeroides (strain ATCC 17023 / DSM 158 / JCM 6121 / CCUG 31486 / LMG 2827 / NBRC 12203 / NCIMB 8253 / ATH 2.4.1.) (Rhodobacter sphaeroides).